Reading from the N-terminus, the 379-residue chain is Homoserine O-succinyltransferase (379 aa).

The 310-residue stretch at 48–357 folds into the AB hydrolase-1 domain; that stretch reads NAVLICHALS…SAHGHDAFLM (310 aa). The active-site Nucleophile is S154. Residue R224 participates in substrate binding. Catalysis depends on residues D319 and H352. A substrate-binding site is contributed by D353.

This sequence belongs to the AB hydrolase superfamily. MetX family. As to quaternary structure, homodimer.

It localises to the cytoplasm. It catalyses the reaction L-homoserine + succinyl-CoA = O-succinyl-L-homoserine + CoA. It functions in the pathway amino-acid biosynthesis; L-methionine biosynthesis via de novo pathway; O-succinyl-L-homoserine from L-homoserine: step 1/1. Functionally, transfers a succinyl group from succinyl-CoA to L-homoserine, forming succinyl-L-homoserine. The chain is Homoserine O-succinyltransferase from Neisseria meningitidis serogroup A / serotype 4A (strain DSM 15465 / Z2491).